The sequence spans 386 residues: Prostacyclin receptor (386 aa).

Residues Met-1–Gly-16 are Extracellular-facing. 2 disulfide bridges follow: Cys-5/Cys-165 and Cys-92/Cys-170. Asn-7 carries an N-linked (GlcNAc...) asparagine glycan. The helical transmembrane segment at Pro-17–Leu-38 threads the bilayer. The Cytoplasmic portion of the chain corresponds to Ser-39–Val-51. A helical membrane pass occupies residues Leu-52 to Ala-76. Residues Arg-77–Ala-94 lie on the Extracellular side of the membrane. A helical membrane pass occupies residues Phe-95–Val-115. At Glu-116–Arg-134 the chain is on the cytoplasmic side. Residues Cys-135–Leu-158 form a helical membrane-spanning segment. The Extracellular portion of the chain corresponds to Gly-159–Gly-181. Residues Ala-182 to Leu-208 form a helical membrane-spanning segment. Over Ser-209–Val-235 the chain is Cytoplasmic. Residues Asp-236 to Phe-260 traverse the membrane as a helical segment. The Extracellular portion of the chain corresponds to Thr-261 to Asp-274. A helical membrane pass occupies residues Leu-275–Phe-295. The Cytoplasmic segment spans residues Arg-296 to Cys-386. The tract at residues Pro-322 to Lys-376 is disordered. Residues Thr-363 to Lys-376 show a composition bias toward polar residues. Cys-383 is subject to Cysteine methyl ester. Cys-383 is lipidated: S-farnesyl cysteine. Residues Ser-384–Cys-386 constitute a propeptide, removed in mature form.

This sequence belongs to the G-protein coupled receptor 1 family. Interacts (non-isoprenylated C-terminus) with PDZK1. In terms of processing, isoprenylation does not influence ligand binding but is required for efficient coupling to the effectors adenylyl cyclase and phospholipase C.

The protein resides in the cell membrane. In terms of biological role, receptor for prostacyclin (prostaglandin I2 or PGI2). The activity of this receptor is mediated by G(s) proteins which activate adenylate cyclase. This Homo sapiens (Human) protein is Prostacyclin receptor (PTGIR).